The sequence spans 189 residues: Receptor activity-modifying protein 2 (189 aa).

The signal sequence occupies residues 1–44 (MAPLRVERAPGGSRLGVTRAQRPTALCLPPLLLLLLLLLGAVSA). Topologically, residues 45 to 157 (SPESLNQSLP…VQPTFSDPPE (113 aa)) are extracellular. The span at 49–61 (LNQSLPESQNQSH) shows a compositional bias: polar residues. The interval 49–69 (LNQSLPESQNQSHPTEDSLVS) is disordered. Residues Asn-50, Asn-58, Asn-99, and Asn-144 are each glycosylated (N-linked (GlcNAc...) asparagine). Cystine bridges form between Cys-83-Cys-113 and Cys-98-Cys-145. A helical membrane pass occupies residues 158 to 179 (DVLLAMIIAPICLIPFLVTLVV). Over 180–189 (WRSKDSDAQA) the chain is Cytoplasmic.

This sequence belongs to the RAMP family. As to quaternary structure, heterodimer of CALCRL and RAMP2; the interaction forms the receptor complex for adrenomedullin/ADM. Heterodimer of CALCR and RAMP2; interaction forms the AMYR2 receptor complex for calcitonin/CALC and amylin/IAPP. Ubiquitous. Expressed predominantly in embryonic brain, lung and gut and in adult heart, lung, skeletal muscle and brain.

Its subcellular location is the cell membrane. Functionally, accessory protein that interacts with and modulates the function of G-protein coupled receptors including calcitonin gene-related peptide type 1 receptor (CALCRL) and calcitonin receptor (CALCR). Required for the transport of CALCRL to the plasma membrane. Together with CALCRL, form a receptor complex for adrenomedullin/ADM. Together with CALCR, act as a receptor complex for calcitonin/CT/CALC. Together with CALCR, also act as a receptor complex for amylin/IAPP. The chain is Receptor activity-modifying protein 2 from Mus musculus (Mouse).